The primary structure comprises 399 residues: Stearoyl-[acyl-carrier-protein] 9-desaturase, chloroplastic (399 aa).

Positions 1 to 12 are enriched in polar residues; that stretch reads MALNLNPVSTPF. Residues 1-35 constitute a chloroplast transit peptide; sequence MALNLNPVSTPFQCRRLPSFSPRQTPSRRSPKFFM. A disordered region spans residues 1-57; the sequence is MALNLNPVSTPFQCRRLPSFSPRQTPSRRSPKFFMASTLSSSSPKEAESLKKPFSPP. Fe cation is bound by residues Glu-141, Glu-179, His-182, Glu-232, Glu-265, and His-268.

The protein belongs to the fatty acid desaturase type 2 family. In terms of assembly, homodimer. Fe(2+) serves as cofactor.

The protein localises to the plastid. It is found in the chloroplast. It carries out the reaction octadecanoyl-[ACP] + 2 reduced [2Fe-2S]-[ferredoxin] + O2 + 2 H(+) = (9Z)-octadecenoyl-[ACP] + 2 oxidized [2Fe-2S]-[ferredoxin] + 2 H2O. Its pathway is lipid metabolism; fatty acid metabolism. Its function is as follows. Converts stearoyl-ACP to oleoyl-ACP by introduction of a cis double bond between carbons 9 and 10 of the acyl chain. The chain is Stearoyl-[acyl-carrier-protein] 9-desaturase, chloroplastic from Spinacia oleracea (Spinach).